The sequence spans 369 residues: Iron-sulfur cluster carrier protein (369 aa).

115–122 (GKGGVGKS) contributes to the ATP binding site.

Belongs to the Mrp/NBP35 ATP-binding proteins family. Homodimer. Holo-ApbC forms a mixture of homodimers and homotetramers.

Functionally, binds and transfers iron-sulfur (Fe-S) clusters to target apoproteins. Can hydrolyze ATP. Both activities are required for function in vivo, but the ability to hydrolyze ATP is not necessary for Fe-S cluster transfer. This is Iron-sulfur cluster carrier protein from Salmonella typhimurium (strain LT2 / SGSC1412 / ATCC 700720).